The chain runs to 147 residues: Large ribosomal subunit protein uL15 (147 aa).

Residues 1–28 (MIRRRKKVRKLRGSHTHGWGCKKKHRGG) are compositionally biased toward basic residues. Residues 1–43 (MIRRRKKVRKLRGSHTHGWGCKKKHRGGGSKGGRGMAGTGKRN) form a disordered region. A compositionally biased stretch (gly residues) spans 29-38 (GSKGGRGMAG).

Belongs to the universal ribosomal protein uL15 family. As to quaternary structure, part of the 50S ribosomal subunit.

In terms of biological role, binds to the 23S rRNA. In Pyrococcus furiosus (strain ATCC 43587 / DSM 3638 / JCM 8422 / Vc1), this protein is Large ribosomal subunit protein uL15.